The primary structure comprises 288 residues: 2-hydroxy-6-oxononadienedioate/2-hydroxy-6-oxononatrienedioate hydrolase (288 aa).

An AB hydrolase-1 domain is found at 38–273 (VVLLHGSGPG…DCGHWAQWEH (236 aa)). The active-site Proton acceptor is histidine 267.

The protein belongs to the AB hydrolase superfamily. MhpC family. In terms of assembly, homodimer.

The catalysed reaction is (2Z,4E)-2-hydroxy-6-oxonona-2,4-dienedioate + H2O = (2Z)-2-hydroxypenta-2,4-dienoate + succinate + H(+). It carries out the reaction (2Z,4E,7E)-2-hydroxy-6-oxonona-2,4,7-trienedioate + H2O = (2Z)-2-hydroxypenta-2,4-dienoate + fumarate + H(+). It participates in aromatic compound metabolism; 3-phenylpropanoate degradation. Functionally, catalyzes the cleavage of the C5-C6 bond of 2-hydroxy-6-oxononadienedioate and 2-hydroxy-6-oxononatrienedioate, a dienol ring fission product of the bacterial meta-cleavage pathway for degradation of phenylpropionic acid. The chain is 2-hydroxy-6-oxononadienedioate/2-hydroxy-6-oxononatrienedioate hydrolase from Escherichia coli O139:H28 (strain E24377A / ETEC).